A 413-amino-acid chain; its full sequence is 4-hydroxy-3-methylbut-2-en-1-yl diphosphate synthase (flavodoxin) (413 aa).

[4Fe-4S] cluster contacts are provided by C305, C308, C351, and E358.

It belongs to the IspG family. [4Fe-4S] cluster is required as a cofactor.

The enzyme catalyses (2E)-4-hydroxy-3-methylbut-2-enyl diphosphate + oxidized [flavodoxin] + H2O + 2 H(+) = 2-C-methyl-D-erythritol 2,4-cyclic diphosphate + reduced [flavodoxin]. It participates in isoprenoid biosynthesis; isopentenyl diphosphate biosynthesis via DXP pathway; isopentenyl diphosphate from 1-deoxy-D-xylulose 5-phosphate: step 5/6. Converts 2C-methyl-D-erythritol 2,4-cyclodiphosphate (ME-2,4cPP) into 1-hydroxy-2-methyl-2-(E)-butenyl 4-diphosphate. In Bartonella tribocorum (strain CIP 105476 / IBS 506), this protein is 4-hydroxy-3-methylbut-2-en-1-yl diphosphate synthase (flavodoxin).